We begin with the raw amino-acid sequence, 327 residues long: Flap endonuclease 1 (327 aa).

The tract at residues Met1–Arg100 is N-domain. Residues Asp28, Asp82, Glu154, Glu156, Asp176, Asp178, and Asp226 each coordinate Mg(2+). An I-domain region spans residues Glu118–Gly247. Residues Ala319 to Thr327 are interaction with PCNA.

Belongs to the XPG/RAD2 endonuclease family. FEN1 subfamily. In terms of assembly, interacts with PCNA. PCNA stimulates the nuclease activity without altering cleavage specificity. It depends on Mg(2+) as a cofactor.

Structure-specific nuclease with 5'-flap endonuclease and 5'-3' exonuclease activities involved in DNA replication and repair. During DNA replication, cleaves the 5'-overhanging flap structure that is generated by displacement synthesis when DNA polymerase encounters the 5'-end of a downstream Okazaki fragment. Binds the unpaired 3'-DNA end and kinks the DNA to facilitate 5' cleavage specificity. Cleaves one nucleotide into the double-stranded DNA from the junction in flap DNA, leaving a nick for ligation. Also involved in the base excision repair (BER) pathway. Acts as a genome stabilization factor that prevents flaps from equilibrating into structures that lead to duplications and deletions. Also possesses 5'-3' exonuclease activity on nicked or gapped double-stranded DNA. The chain is Flap endonuclease 1 from Halobacterium salinarum (strain ATCC 29341 / DSM 671 / R1).